A 412-amino-acid polypeptide reads, in one-letter code: Orcinol synthase (412 aa).

Residues C164, H322, and N355 contribute to the active site.

It belongs to the thiolase-like superfamily. Chalcone/stilbene synthases family. As to quaternary structure, homodimer. Mainly expressed in young leaves, and barely in mature leaves and twigs.

It carries out the reaction 3 malonyl-CoA + acetyl-CoA + 3 H(+) = orcinol + 4 CO2 + 4 CoA. The enzyme catalyses 3 malonyl-CoA + acetyl-CoA + 2 H(+) = orsellinate + 3 CO2 + 4 CoA. The catalysed reaction is 3 malonyl-CoA + acetyl-CoA + 3 H(+) = tetraacetate lactone + 3 CO2 + 4 CoA. It catalyses the reaction 2 malonyl-CoA + acetyl-CoA + 2 H(+) = triacetate lactone + 2 CO2 + 3 CoA. It carries out the reaction 3 malonyl-CoA + acetyl-CoA + 3 H(+) = 2-acetylphloroglucinol + 3 CO2 + 4 CoA. It participates in secondary metabolite biosynthesis; terpenoid biosynthesis. Its function is as follows. Involved in the biosynthesis of acetate-derived aromatic tetraketides natural products, precursors of daurichromenic acid, an anti-human immunodeficiency viruses (HIV) meroterpenoid consisting of sesquiterpene and orsellinic acid (OSA) moieties. Accepts acetyl-CoA as starter substrate and produces orcinol as the major reaction product, along with four minor products including OSA, tetraacetate lactone, triacetate lactone and 2-acetylphloroglucinol. This Rhododendron dauricum (Azalea daurica) protein is Orcinol synthase.